The following is a 172-amino-acid chain: UPF0316 protein Clos_0555 (172 aa).

3 helical membrane passes run 3 to 23, 34 to 54, and 61 to 81; these read ALLG…MATI, VIAA…IGKV, and PLNV…GIFL.

The protein belongs to the UPF0316 family.

The protein localises to the cell membrane. In Alkaliphilus oremlandii (strain OhILAs) (Clostridium oremlandii (strain OhILAs)), this protein is UPF0316 protein Clos_0555.